Reading from the N-terminus, the 228-residue chain is Sugar fermentation stimulation protein homolog (228 aa).

Belongs to the SfsA family.

This Psychromonas ingrahamii (strain DSM 17664 / CCUG 51855 / 37) protein is Sugar fermentation stimulation protein homolog.